We begin with the raw amino-acid sequence, 43 residues long: METATLVAISISGLLVSFTGYALYTAFGQPSQKLRDPFEEHGD.

Residues 5 to 27 form a helical membrane-spanning segment; sequence TLVAISISGLLVSFTGYALYTAF.

It belongs to the PsbN family.

The protein localises to the plastid. Its subcellular location is the chloroplast thylakoid membrane. In terms of biological role, may play a role in photosystem I and II biogenesis. The protein is Protein PsbN of Coelogyne cristata (Orchid).